Here is an 853-residue protein sequence, read N- to C-terminus: WEB family protein At5g16730, chloroplastic (853 aa).

2 stretches are compositionally biased toward low complexity: residues 1–27 and 36–49; these read MASKTKTSLSETTTTTTPTGKSSPATP and KSETSNNNSPSTTT. A chloroplast-targeting transit peptide spans 1 to 84; sequence MASKTKTSLS…PTPPEKSQAR (84 aa). Disordered regions lie at residues 1 to 106, 386 to 465, 666 to 765, and 778 to 820; these read MASK…IKED, KEDL…SKKA, LAKK…SVEV, and KEAF…ALTA. Residues 92 to 101 show a composition bias toward polar residues; sequence ESPQTTTRLS. Positions 94-670 form a coiled coil; that stretch reads PQTTTRLSQI…LEEAILAKKQ (577 aa). Basic and acidic residues-rich tracts occupy residues 402-465, 698-718, and 732-753; these read EVSK…SKKA, NGHRSVEEKSAKVETLDHEPP, and MEEKEVNGKPEVETEKKEKKDE. A compositionally biased stretch (acidic residues) spans 754 to 763; that stretch reads SQDDDKDDSV. Over residues 778–788 the composition is skewed to basic and acidic residues; sequence KEAFPDKKSEL. Phosphoserine is present on S790. Residues 797-807 show a composition bias toward basic and acidic residues; the sequence is SSKIDESDKTS.

It belongs to the WEB family.

It is found in the plastid. It localises to the chloroplast. This is WEB family protein At5g16730, chloroplastic from Arabidopsis thaliana (Mouse-ear cress).